Here is a 466-residue protein sequence, read N- to C-terminus: Ribulose bisphosphate carboxylase large chain (466 aa).

Lys5 bears the N6,N6,N6-trimethyllysine mark. Positions 114 and 164 each coordinate substrate. The active-site Proton acceptor is the Lys166. Lys168 serves as a coordination point for substrate. Mg(2+) contacts are provided by Lys192, Asp194, and Glu195. Residue Lys192 is modified to N6-carboxylysine. The active-site Proton acceptor is the His285. 3 residues coordinate substrate: Arg286, His318, and Ser370.

This sequence belongs to the RuBisCO large chain family. Type I subfamily. Heterohexadecamer of 8 large chains and 8 small chains; disulfide-linked. The disulfide link is formed within the large subunit homodimers. Mg(2+) is required as a cofactor. In terms of processing, the disulfide bond which can form in the large chain dimeric partners within the hexadecamer appears to be associated with oxidative stress and protein turnover.

The protein resides in the plastid. It localises to the chloroplast. The enzyme catalyses 2 (2R)-3-phosphoglycerate + 2 H(+) = D-ribulose 1,5-bisphosphate + CO2 + H2O. The catalysed reaction is D-ribulose 1,5-bisphosphate + O2 = 2-phosphoglycolate + (2R)-3-phosphoglycerate + 2 H(+). RuBisCO catalyzes two reactions: the carboxylation of D-ribulose 1,5-bisphosphate, the primary event in carbon dioxide fixation, as well as the oxidative fragmentation of the pentose substrate in the photorespiration process. Both reactions occur simultaneously and in competition at the same active site. This Cercidiphyllum japonicum (Katsura tree) protein is Ribulose bisphosphate carboxylase large chain.